We begin with the raw amino-acid sequence, 776 residues long: Isoamylase (776 aa).

An N-terminal signal peptide occupies residues 1-26 (MKCPKILAALLGCAVLAGVPAMPAHA). Ca(2+)-binding residues include Asp-154, Glu-255, Thr-256, Asn-258, and Asp-285. Asp-401 serves as the catalytic Nucleophile. A disulfide bond links Cys-410 and Cys-422. Glu-461 functions as the Proton donor in the catalytic mechanism. 2 disulfides stabilise this stretch: Cys-546–Cys-616 and Cys-738–Cys-766.

It belongs to the glycosyl hydrolase 13 family. As to quaternary structure, monomer. Ca(2+) serves as cofactor.

Its subcellular location is the secreted. It carries out the reaction Hydrolysis of (1-&gt;6)-alpha-D-glucosidic branch linkages in glycogen, amylopectin and their beta-limit dextrins.. The chain is Isoamylase (iam) from Pseudomonas amyloderamosa.